The chain runs to 218 residues: Probable nicotinate-nucleotide adenylyltransferase (218 aa).

Belongs to the NadD family.

It carries out the reaction nicotinate beta-D-ribonucleotide + ATP + H(+) = deamido-NAD(+) + diphosphate. The protein operates within cofactor biosynthesis; NAD(+) biosynthesis; deamido-NAD(+) from nicotinate D-ribonucleotide: step 1/1. Its function is as follows. Catalyzes the reversible adenylation of nicotinate mononucleotide (NaMN) to nicotinic acid adenine dinucleotide (NaAD). The protein is Probable nicotinate-nucleotide adenylyltransferase of Sodalis glossinidius (strain morsitans).